A 180-amino-acid chain; its full sequence is Large ribosomal subunit protein uL5 (180 aa).

It belongs to the universal ribosomal protein uL5 family. As to quaternary structure, part of the 50S ribosomal subunit; part of the 5S rRNA/L5/L18/L25 subcomplex. Contacts the 5S rRNA and the P site tRNA. Forms a bridge to the 30S subunit in the 70S ribosome.

In terms of biological role, this is one of the proteins that bind and probably mediate the attachment of the 5S RNA into the large ribosomal subunit, where it forms part of the central protuberance. In the 70S ribosome it contacts protein S13 of the 30S subunit (bridge B1b), connecting the 2 subunits; this bridge is implicated in subunit movement. Contacts the P site tRNA; the 5S rRNA and some of its associated proteins might help stabilize positioning of ribosome-bound tRNAs. The chain is Large ribosomal subunit protein uL5 from Anaeromyxobacter sp. (strain Fw109-5).